The sequence spans 83 residues: Sec-independent protein translocase protein TatA (83 aa).

The chain crosses the membrane as a helical span at residues methionine 1–glycine 21. Composition is skewed to basic and acidic residues over residues glutamate 47–serine 57 and alanine 71–valine 83. The segment at glutamate 47 to valine 83 is disordered.

This sequence belongs to the TatA/E family. The Tat system comprises two distinct complexes: a TatABC complex, containing multiple copies of TatA, TatB and TatC subunits, and a separate TatA complex, containing only TatA subunits. Substrates initially bind to the TatABC complex, which probably triggers association of the separate TatA complex to form the active translocon.

The protein resides in the cell inner membrane. Its function is as follows. Part of the twin-arginine translocation (Tat) system that transports large folded proteins containing a characteristic twin-arginine motif in their signal peptide across membranes. TatA could form the protein-conducting channel of the Tat system. The polypeptide is Sec-independent protein translocase protein TatA (Shewanella woodyi (strain ATCC 51908 / MS32)).